A 394-amino-acid chain; its full sequence is Elongation factor Tu (394 aa).

A tr-type G domain is found at Lys10–Val204. Positions Gly19–Thr26 are G1. Gly19–Thr26 lines the GTP pocket. Mg(2+) is bound at residue Thr26. The segment at Gly60–Lys64 is G2. The interval Asp81–Gly84 is G3. GTP is bound by residues Asp81–His85 and Asn136–Asp139. The tract at residues Asn136–Asp139 is G4. The interval Ser174 to Leu176 is G5.

It belongs to the TRAFAC class translation factor GTPase superfamily. Classic translation factor GTPase family. EF-Tu/EF-1A subfamily. In terms of assembly, monomer.

The protein localises to the cytoplasm. The catalysed reaction is GTP + H2O = GDP + phosphate + H(+). GTP hydrolase that promotes the GTP-dependent binding of aminoacyl-tRNA to the A-site of ribosomes during protein biosynthesis. The protein is Elongation factor Tu of Onion yellows phytoplasma (strain OY-M).